The sequence spans 385 residues: Protein pelota homolog (385 aa).

K162 is covalently cross-linked (Glycyl lysine isopeptide (Lys-Gly) (interchain with G-Cter in SUMO2)). Residues S374, S380, S381, and S382 each carry the phosphoserine modification.

This sequence belongs to the eukaryotic release factor 1 family. Pelota subfamily. Component of the Pelota-HBS1L complex, also named Dom34-Hbs1 complex, composed of PELO and HBS1L. Interacts with PINK1. Interacts with ABCE1. Interacts with CNOT4. A divalent metal cation serves as cofactor.

It localises to the cytoplasm. Component of the Pelota-HBS1L complex, a complex that recognizes stalled ribosomes and triggers the No-Go Decay (NGD) pathway. In the Pelota-HBS1L complex, PELO recognizes ribosomes stalled at the 3' end of an mRNA and engages stalled ribosomes by destabilizing mRNA in the mRNA channel. Following mRNA extraction from stalled ribosomes by the SKI complex, the Pelota-HBS1L complex promotes recruitment of ABCE1, which drives the disassembly of stalled ribosomes, followed by degradation of damaged mRNAs as part of the NGD pathway. As part of the PINK1-regulated signaling, upon mitochondrial damage is recruited to the ribosome/mRNA-ribonucleoprotein complex associated to mitochondrial outer membrane thereby enabling the recruitment of autophagy receptors and induction of mitophagy. This chain is Protein pelota homolog (PELO), found in Pongo abelii (Sumatran orangutan).